The primary structure comprises 477 residues: Ribulose bisphosphate carboxylase large chain (477 aa).

A propeptide spanning residues 1-2 is cleaved from the precursor; sequence MS. Proline 3 is subject to N-acetylproline. Lysine 14 carries the post-translational modification N6,N6,N6-trimethyllysine. Asparagine 123 and threonine 173 together coordinate substrate. Lysine 175 serves as the catalytic Proton acceptor. Lysine 177 lines the substrate pocket. Mg(2+) is bound by residues lysine 201, aspartate 203, and glutamate 204. Lysine 201 bears the N6-carboxylysine mark. Histidine 294 functions as the Proton acceptor in the catalytic mechanism. Positions 295, 327, and 379 each coordinate substrate.

Belongs to the RuBisCO large chain family. Type I subfamily. Heterohexadecamer of 8 large chains and 8 small chains; disulfide-linked. The disulfide link is formed within the large subunit homodimers. Mg(2+) serves as cofactor. Post-translationally, the disulfide bond which can form in the large chain dimeric partners within the hexadecamer appears to be associated with oxidative stress and protein turnover.

Its subcellular location is the plastid. It is found in the chloroplast. It carries out the reaction 2 (2R)-3-phosphoglycerate + 2 H(+) = D-ribulose 1,5-bisphosphate + CO2 + H2O. The enzyme catalyses D-ribulose 1,5-bisphosphate + O2 = 2-phosphoglycolate + (2R)-3-phosphoglycerate + 2 H(+). Its function is as follows. RuBisCO catalyzes two reactions: the carboxylation of D-ribulose 1,5-bisphosphate, the primary event in carbon dioxide fixation, as well as the oxidative fragmentation of the pentose substrate in the photorespiration process. Both reactions occur simultaneously and in competition at the same active site. The sequence is that of Ribulose bisphosphate carboxylase large chain from Cichorium intybus (Chicory).